The chain runs to 361 residues: tRNA/tmRNA (uracil-C(5))-methyltransferase (361 aa).

Residues glutamine 185, tyrosine 213, asparagine 218, glutamate 234, and aspartate 294 each contribute to the S-adenosyl-L-methionine site. The active-site Nucleophile is the cysteine 319. The active-site Proton acceptor is glutamate 353.

This sequence belongs to the class I-like SAM-binding methyltransferase superfamily. RNA M5U methyltransferase family. TrmA subfamily.

The catalysed reaction is uridine(54) in tRNA + S-adenosyl-L-methionine = 5-methyluridine(54) in tRNA + S-adenosyl-L-homocysteine + H(+). The enzyme catalyses uridine(341) in tmRNA + S-adenosyl-L-methionine = 5-methyluridine(341) in tmRNA + S-adenosyl-L-homocysteine + H(+). Dual-specificity methyltransferase that catalyzes the formation of 5-methyluridine at position 54 (m5U54) in all tRNAs, and that of position 341 (m5U341) in tmRNA (transfer-mRNA). The sequence is that of tRNA/tmRNA (uracil-C(5))-methyltransferase from Azotobacter vinelandii (strain DJ / ATCC BAA-1303).